A 1507-amino-acid polypeptide reads, in one-letter code: Protein TIC 214 (1507 aa).

The next 6 helical transmembrane spans lie at I4–G24, T53–L73, L81–Y101, A129–F149, I163–L183, and L202–C222.

Belongs to the TIC214 family. Part of the Tic complex.

It is found in the plastid. It localises to the chloroplast inner membrane. In terms of biological role, involved in protein precursor import into chloroplasts. May be part of an intermediate translocation complex acting as a protein-conducting channel at the inner envelope. The protein is Protein TIC 214 of Staurastrum punctulatum (Green alga).